The following is a 460-amino-acid chain: MEMYFKRMKDEWTGLVEQADPLIRAKAAEIAVAHAHYLSIEFYRIVRIDPHAEEFLSNEQVERQLKSAMERWIINVLSAQVDDVERLIQIQHTVAEVHARIGIPVEIVEMGFRVLKKILYPVIFSSDYSAAEKLQVYHFSINSIDIAMEVMTRAFTFSDSSASKEDENYRIFSLLENAEEEKERQIASILSWEIDIIYKILLDSDLGSSLPLSQADFGLWFNHKGRHYFSGIAEVGHISRLIQDFDGIFNQTMRNTRNLNNRSLRVKFLLQIRNTVSQIITLLRELFEEVSRHEVGMDVLTKLLNRRFLPTIFKREIAHANRTGTPLSVLIIDVDKFKEINDTWGHNTGDEILRKVSQAFYDNVRSSDYVFRYGGDEFIIVLTEASENETLRTAERIRSRVEKTKLKAANGEDIALSLSIGAAMFNGHPDYERLIQIADEALYIAKRRGRNRVELWKASL.

His-98 provides a ligand contact to heme. The GGDEF domain occupies 325-458; the sequence is TPLSVLIIDV…GRNRVELWKA (134 aa). A Mg(2+)-binding site is contributed by Asp-333. 2 residues coordinate substrate: Asn-341 and Asp-350. Asp-376 lines the Mg(2+) pocket. The active-site Proton acceptor is Asp-376.

Heme is required as a cofactor. Requires Mg(2+) as cofactor.

The enzyme catalyses 2 GTP = 3',3'-c-di-GMP + 2 diphosphate. It participates in purine metabolism; 3',5'-cyclic di-GMP biosynthesis. In terms of biological role, globin-coupled heme-based oxygen sensor protein displaying diguanylate cyclase (DGC) activity in response to oxygen availability. Thus, catalyzes the synthesis of cyclic diguanylate (c-di-GMP) via the condensation of 2 GTP molecules. Cyclic-di-GMP is a second messenger which controls cell surface-associated traits in bacteria. The sequence is that of Diguanylate cyclase DosC (dosC) from Shigella boydii serotype 4 (strain Sb227).